Consider the following 397-residue polypeptide: MGWKTLDDMDLAGKVVLVRVDVNVPMENGEVTDATRIEKIVPTVEDILKKGGKPVLLAHFGRPKGKVVEEMSLRLVLPALQKALPGTKVSFAADCVGPEPEQAVAAMLEGEVLLLENTRFHAGEEKNDPELAAAMAKLGQVYVNDAFSAAHRAHASTEGLARLLPSAAGRLMEAELKALEAALGHPERPVVAVVGGAKVSTKLDLLGNLVGRVDHLVIGGGMANTFLVAQGIEVGKSLAERDMADTAREILSKAKAAGCTIHLPLDVVVAREFKAGAANETVETSACPADAMILDAGPKTVAALSEVFASAKTLIWNGPLGAFEIEPFDAATNAAALQVAQLTKAGQLISVAGGGDTVAALNKAGAAEGFSYISTAGGAFLEWMEGKELPGVAALTV.

Substrate is bound by residues 21–23 (DVN), R36, 59–62 (HFGR), R119, and R152. ATP contacts are provided by residues K202, E324, and 354-357 (GGDT).

It belongs to the phosphoglycerate kinase family. In terms of assembly, monomer.

It is found in the cytoplasm. It carries out the reaction (2R)-3-phosphoglycerate + ATP = (2R)-3-phospho-glyceroyl phosphate + ADP. Its pathway is carbohydrate degradation; glycolysis; pyruvate from D-glyceraldehyde 3-phosphate: step 2/5. The polypeptide is Phosphoglycerate kinase (Cereibacter sphaeroides (strain KD131 / KCTC 12085) (Rhodobacter sphaeroides)).